The primary structure comprises 464 residues: Dihydrolipoyl dehydrogenase (464 aa).

FAD-binding positions include 36-44 (EGAALGGTC), Lys53, and Ala119. A disulfide bond links Cys44 and Cys49. Residues 184–188 (GGGYI), Glu207, and 269–272 (AVGR) contribute to the NAD(+) site. The FAD site is built by Asp311 and Ala319. His443 serves as the catalytic Proton acceptor.

The protein belongs to the class-I pyridine nucleotide-disulfide oxidoreductase family. As to quaternary structure, homodimer. FAD serves as cofactor.

The protein localises to the cytoplasm. It catalyses the reaction N(6)-[(R)-dihydrolipoyl]-L-lysyl-[protein] + NAD(+) = N(6)-[(R)-lipoyl]-L-lysyl-[protein] + NADH + H(+). Its function is as follows. The branched-chain alpha-keto dehydrogenase complex catalyzes the overall conversion of alpha-keto acids to acyl-CoA and CO(2). It contains multiple copies of 3 enzymatic components: branched-chain alpha-keto acid decarboxylase (E1), lipoamide acyltransferase (E2) and lipoamide dehydrogenase (E3). The chain is Dihydrolipoyl dehydrogenase from Pseudomonas aeruginosa (strain ATCC 15692 / DSM 22644 / CIP 104116 / JCM 14847 / LMG 12228 / 1C / PRS 101 / PAO1).